Here is a 264-residue protein sequence, read N- to C-terminus: Acyl-[acyl-carrier-protein]--UDP-N-acetylglucosamine O-acyltransferase (264 aa).

It belongs to the transferase hexapeptide repeat family. LpxA subfamily. Homotrimer.

The protein resides in the cytoplasm. The catalysed reaction is a (3R)-hydroxyacyl-[ACP] + UDP-N-acetyl-alpha-D-glucosamine = a UDP-3-O-[(3R)-3-hydroxyacyl]-N-acetyl-alpha-D-glucosamine + holo-[ACP]. Its pathway is glycolipid biosynthesis; lipid IV(A) biosynthesis; lipid IV(A) from (3R)-3-hydroxytetradecanoyl-[acyl-carrier-protein] and UDP-N-acetyl-alpha-D-glucosamine: step 1/6. Involved in the biosynthesis of lipid A, a phosphorylated glycolipid that anchors the lipopolysaccharide to the outer membrane of the cell. This Glaesserella parasuis serovar 5 (strain SH0165) (Haemophilus parasuis) protein is Acyl-[acyl-carrier-protein]--UDP-N-acetylglucosamine O-acyltransferase.